A 142-amino-acid chain; its full sequence is Lysozyme 2 (142 aa).

A signal peptide spans 1-20 (MLKLTLTILAAVLLVTPAFG). The C-type lysozyme domain maps to 21–142 (KVYTRCSLAR…HTLPSIDDCF (122 aa)). 4 disulfides stabilise this stretch: Cys-26-Cys-141, Cys-47-Cys-131, Cys-82-Cys-98, and Cys-94-Cys-112. Glu-52 is an active-site residue. N-linked (GlcNAc...) asparagine glycosylation is present at Asn-66. Asp-70 is an active-site residue.

Belongs to the glycosyl hydrolase 22 family. In terms of tissue distribution, expressed only in the midgut where it is concentrated around the middle in all larval stages.

The protein localises to the secreted. It catalyses the reaction Hydrolysis of (1-&gt;4)-beta-linkages between N-acetylmuramic acid and N-acetyl-D-glucosamine residues in a peptidoglycan and between N-acetyl-D-glucosamine residues in chitodextrins.. Lysozymes have primarily a bacteriolytic function. Shows antibacterial activity against Gram-positive bacterium M.luteus but shows no activity against Gram-negative bacterium E.coli. Likely to play a role in the eradication of ingested pathogens during their passage through the intestine. The protein is Lysozyme 2 of Lucilia sericata (Green bottle fly).